We begin with the raw amino-acid sequence, 138 residues long: Basic phospholipase A2 vaspin B chain (138 aa).

An N-terminal signal peptide occupies residues 1-16 (MRILWIVAVCLIGVEG). 7 disulfide bridges follow: Cys42-Cys131, Cys44-Cys60, Cys59-Cys111, Cys65-Cys138, Cys66-Cys104, Cys73-Cys97, and Cys91-Cys102. Ca(2+) contacts are provided by Tyr43, Gly45, and Gly47. His63 is an active-site residue. A Ca(2+)-binding site is contributed by Asp64. Residue Asp105 is part of the active site.

This sequence belongs to the phospholipase A2 family. Group II subfamily. D49 sub-subfamily. Heterodimer of a weakly toxic basic protein having phospholipase A2 activity (B chain (AC Q8JFG1)) and a non-toxic acidic protein functioning as its inhibitor (A chain). It depends on Ca(2+) as a cofactor. Expressed by the venom gland.

It is found in the secreted. It catalyses the reaction a 1,2-diacyl-sn-glycero-3-phosphocholine + H2O = a 1-acyl-sn-glycero-3-phosphocholine + a fatty acid + H(+). Its function is as follows. Heterodimer: postsynaptic neurotoxin. Functionally, monomer: snake venom phospholipase A2 (PLA2) that shows postsynaptic neurotoxicity. PLA2 catalyzes the calcium-dependent hydrolysis of the 2-acyl groups in 3-sn-phosphoglycerides. In Vipera aspis aspis (Aspic viper), this protein is Basic phospholipase A2 vaspin B chain.